The sequence spans 104 residues: NADH dehydrogenase [ubiquinone] flavoprotein 3, mitochondrial (104 aa).

A mitochondrion-targeting transit peptide spans 1-35 (MAVSLLLRGGRIRALKAVLLEARVFPGELVSVVRL). Residues 38-50 (ESEKSAKEKELHP) show a composition bias toward basic and acidic residues. Positions 38–68 (ESEKSAKEKELHPKTQSVLKEPEPTDTTTYK) are disordered. Ser-101 carries the post-translational modification Phosphoserine.

The protein belongs to the complex I NDUFV3 subunit family. In terms of assembly, complex I is composed of 45 different subunits. This is a component of the flavoprotein-sulfur (FP) fragment of the enzyme.

The protein resides in the mitochondrion inner membrane. Functionally, accessory subunit of the mitochondrial membrane respiratory chain NADH dehydrogenase (Complex I), that is believed not to be involved in catalysis. Complex I functions in the transfer of electrons from NADH to the respiratory chain. The immediate electron acceptor for the enzyme is believed to be ubiquinone. May be the terminally assembled subunit of Complex I. This chain is NADH dehydrogenase [ubiquinone] flavoprotein 3, mitochondrial (Ndufv3), found in Mus musculus (Mouse).